We begin with the raw amino-acid sequence, 419 residues long: MIVTYGTVGCPVSRGGSPGCGRRIAEELRLAEDARLRLALLGRCIVKGSPAQARGELRAELKAIDATIELRKELDAIDAEWAPKIELSAELRAIDAEWRPAIRLRSAYRAIIGRIELRKELDAIDAEWAPKIELSAELKAIDAEWRPAIRLRSAYRAIIGRWELSKELKAIDAEWRPAIARESLRKELDAIDAEWQHAITFWHISRAIIGSIELSKELKAIDAKWKYVAIYERQKAQRRREERAAKAREELRKELNDIDAKWKSASAIKLRKDLRSTSEGVDHTEFALELRATDKSGNMELVLKLKATDTKNQHDAIVKAIEDGFVGYAAECGAATRELNACGGMSTTSAPSTDLISTVVSAVTTGTGQQQSAGSESQRPTECGGGGTLLSSLFALILPSSNWYCNAVLYGGFLGCLGS.

Positions methionine 1–alanine 39 are cleaved as a signal peptide. Residues glutamate 232–tryptophan 262 are a coiled coil.

It is found in the secreted. Functionally, associates with actin filament appendages that are formed in the inclusion appendages of the parasitophorous vacuole during infection of the host erythrocyte. This chain is Appendage-associated protein, found in Anaplasma marginale (strain St. Maries).